Reading from the N-terminus, the 784-residue chain is ATP-dependent 6-phosphofructokinase, platelet type (784 aa).

Met-1 is subject to N-acetylmethionine. The tract at residues 1–399 (MDADDSRAPK…NLNTYKRLAI (399 aa)) is N-terminal catalytic PFK domain 1. Phosphoserine occurs at positions 6, 12, and 21. ATP contacts are provided by residues Gly-34, 97–98 (RC), and 127–130 (GDGS). Asp-128 is a Mg(2+) binding site. Ser-142 is subject to Phosphoserine. Substrate-binding positions include 173–175 (SID), Arg-210, 217–219 (MGR), Glu-273, Arg-301, and 307–310 (HVQR). The Proton acceptor role is filled by Asp-175. Ser-386 carries the phosphoserine modification. Position 395 is an N6-acetyllysine (Lys-395). An interdomain linker region spans residues 400–411 (KLPDDQIPKTNC). Residues 412–784 (NVAVINVGAP…QLEHVQPWSV (373 aa)) form a C-terminal regulatory PFK domain 2 region. Residue Arg-481 coordinates beta-D-fructose 2,6-bisphosphate. Lys-486 is modified (N6-acetyllysine). Residues 538–542 (TVSNN), Arg-576, 583–585 (MGG), and Glu-639 contribute to the beta-D-fructose 2,6-bisphosphate site. O-linked (GlcNAc) serine glycosylation occurs at Ser-540. The residue at position 651 (Tyr-651) is a Phosphotyrosine. Beta-D-fructose 2,6-bisphosphate contacts are provided by residues Arg-665 and 671-674 (HMQQ). An N6-acetyllysine modification is found at Lys-688. Beta-D-fructose 2,6-bisphosphate is bound at residue Arg-744. Ser-783 bears the Phosphoserine mark.

The protein belongs to the phosphofructokinase type A (PFKA) family. ATP-dependent PFK group I subfamily. Eukaryotic two domain clade 'E' sub-subfamily. As to quaternary structure, homo- and heterotetramers. Phosphofructokinase (PFK) enzyme functions as a tetramer composed of different combinations of 3 types of subunits, called PFKM (M), PFKL (L) and PFKP (P). The composition of the PFK tetramer differs according to the tissue type it is present in. The kinetic and regulatory properties of the tetrameric enzyme are dependent on the subunit composition, hence can vary across tissues. Interacts with ATG4B; promoting phosphorylation of ATG4B. Mg(2+) is required as a cofactor. Post-translationally, glcNAcylation decreases enzyme activity. In terms of processing, phosphorylation at Ser-386 promotes interaction with ATG4B.

The protein resides in the cytoplasm. The enzyme catalyses beta-D-fructose 6-phosphate + ATP = beta-D-fructose 1,6-bisphosphate + ADP + H(+). Its pathway is carbohydrate degradation; glycolysis; D-glyceraldehyde 3-phosphate and glycerone phosphate from D-glucose: step 3/4. Its activity is regulated as follows. Allosterically activated by ADP, AMP, or fructose 2,6-bisphosphate, and allosterically inhibited by ATP or citrate. Catalyzes the phosphorylation of D-fructose 6-phosphate to fructose 1,6-bisphosphate by ATP, the first committing step of glycolysis. The polypeptide is ATP-dependent 6-phosphofructokinase, platelet type (PFKP) (Pongo abelii (Sumatran orangutan)).